A 149-amino-acid chain; its full sequence is HMG1/2-like protein (149 aa).

Basic and acidic residues-rich tracts occupy residues 1–15 (MKGG…KAET) and 35–44 (KGKEPKDPNK). Disordered regions lie at residues 1 to 52 (MKGG…PSAF) and 112 to 149 (AYNK…EDDD). Residues 45–114 (PKRPPSAFFV…EYEITLQAYN (70 aa)) constitute a DNA-binding region (HMG box). The segment covering 134–149 (NDEDEDEEDEEDEDDD) has biased composition (acidic residues).

The protein belongs to the HMGB family.

Its subcellular location is the nucleus. This is HMG1/2-like protein from Vicia faba (Broad bean).